Reading from the N-terminus, the 574-residue chain is MDADSINSFFLIGALLAAVSVLLSPMSSRLGIPILLIFLAVGILAGEDGLGGIQFDDYSTAYLVSNLALAIILLDGGMRTRVASFRVALWPALSLATFGVAITTSITGLMAAWLFDLHWLQGLLVGAIVGSTDAAAVFSLLKGRSLNERVGATLEIESGSNDPMAVFLTVTLIAILANVDTELSVSFMLVSFIKQFGLGICLGLGGGWLLWKLVNLSKLAEGLYSILVLSGGLIIYAVSNKLGGSGILSIYLVGLFLGNKPTRGRHSILNVLDGMTWVSQIGMFLVLGLLLTPSDLFDILLPGFALAFGMILFARPLAVWLSLLPFKSFSSRDRWFISWVGLRGAVPIILAVFPMMAGLPGAQLYFNLAFFVVLVSLLIQGASLTTAARLAKVELPPKPLPISRSGVEIYPSSEWEVFVYCLSENKWCVGEPLKRLSMPDGTRIAAVFRGDKLLHPSGSTCLEAGDILCVLGQERSLDALSHLFSQAPETKEVPRFFGDFFIETDVKLADLAPIYGLDLDEEASEMTVADLVASELGAHPVIGDHFQWQSLHWVVAGLHEGKVTNIGIRLPPET.

A run of 13 helical transmembrane segments spans residues 6–26 (INSFFLIGALLAAVSVLLSPM), 30–50 (LGIPILLIFLAVGILAGEDGL), 58–78 (YSTAYLVSNLALAIILLDGGM), 87–107 (VALWPALSLATFGVAITTSIT), 109–129 (LMAAWLFDLHWLQGLLVGAIV), 173–193 (IAILANVDTELSVSFMLVSFI), 196–216 (FGLGICLGLGGGWLLWKLVNL), 219–239 (LAEGLYSILVLSGGLIIYAVS), 242–262 (LGGSGILSIYLVGLFLGNKPT), 271–291 (VLDGMTWVSQIGMFLVLGLLL), 299–319 (ILLPGFALAFGMILFARPLAV), 335–355 (WFISWVGLRGAVPIILAVFPM), and 359–379 (LPGAQLYFNLAFFVVLVSLLI). Residues 405–486 (SGVEIYPSSE…LDALSHLFSQ (82 aa)) enclose the RCK C-terminal domain.

Belongs to the monovalent cation:proton antiporter 1 (CPA1) transporter (TC 2.A.36) family. NhaP2 subfamily.

The protein localises to the cell inner membrane. It catalyses the reaction K(+)(in) + H(+)(out) = K(+)(out) + H(+)(in). In terms of biological role, k(+)/H(+) antiporter that extrudes potassium in exchange for external protons and maintains the internal concentration of potassium under toxic levels. This is K(+)/H(+) antiporter NhaP2 from Shewanella sp. (strain W3-18-1).